A 240-amino-acid polypeptide reads, in one-letter code: Adenosine 5'-phosphosulfate reductase (240 aa).

Cys-125, Cys-126, Cys-208, and Cys-211 together coordinate [4Fe-4S] cluster. The active-site Nucleophile; cysteine thiosulfonate intermediate is the Cys-234.

Belongs to the PAPS reductase family. CysH subfamily. Requires [4Fe-4S] cluster as cofactor.

It localises to the cytoplasm. The enzyme catalyses [thioredoxin]-disulfide + sulfite + AMP + 2 H(+) = adenosine 5'-phosphosulfate + [thioredoxin]-dithiol. Its pathway is sulfur metabolism; hydrogen sulfide biosynthesis; sulfite from sulfate. Functionally, catalyzes the formation of sulfite from adenosine 5'-phosphosulfate (APS) using thioredoxin as an electron donor. This is Adenosine 5'-phosphosulfate reductase from Oceanobacillus iheyensis (strain DSM 14371 / CIP 107618 / JCM 11309 / KCTC 3954 / HTE831).